A 397-amino-acid chain; its full sequence is Iripin-2 (397 aa).

A signal peptide spans 1 to 21 (MEDFKMKTLAAFLSLLVLCWA). N-linked (GlcNAc...) asparagine glycosylation is found at asparagine 109 and asparagine 270.

It belongs to the serpin family. In terms of assembly, interacts with mouse MCPT4. As to expression, female salivary gland. Ovary. Midgut.

The protein localises to the secreted. Functionally, serine protease inhibitor that modulates blood feeding of ticks on vertebrate species. Inhibits host trypsin, thrombin (F2), alpha-chymotrypsin, cathepsin G (CTSG) and mast cell chymase (CMA1). Inhibits host cathepsin G- and thrombin-induced platelet aggregation. Inhibits acute inflammation in the host. Suppresses neutrophil recruitment in inflamed area. Does not inhibit host plasmin (PLG), factor Xa (F10), factor XIa (F11), elastase and proteinase 3/myeloblastin (PRTN3). Its function is as follows. (Microbial infection) Inhibits IL6 production by mouse splenic dendritic cells in response to Borrelia burgdorferi exposure. Decreases levels of STAT3 phosphorylation in mouse splenic dendritic cells in response to Borrelia burgdorferi exposure and in Borrelia-primed CD4+ T-lymphocytes. Inhibits differentiation of mouse Th17 cells, a subset of CD4+ T-lymphocytes that play a crucial role in protection against extracellular bacteria, in response to Borrelia burgdorferi exposure via inhibition of the IL6/STAT3 signaling pathway. The polypeptide is Iripin-2 (Ixodes ricinus (Common tick)).